The chain runs to 382 residues: Lipid-A-disaccharide synthase (382 aa).

The protein belongs to the LpxB family.

The enzyme catalyses 2-N,3-O-bis[(3R)-3-hydroxytetradecanoyl]-alpha-D-glucosaminyl 1-phosphate + UDP-2-N,3-O-bis[(3R)-3-hydroxytetradecanoyl]-alpha-D-glucosamine = lipid A disaccharide (E. coli) + UDP + H(+). It carries out the reaction a lipid X + a UDP-2-N,3-O-bis[(3R)-3-hydroxyacyl]-alpha-D-glucosamine = a lipid A disaccharide + UDP + H(+). Its pathway is glycolipid biosynthesis; lipid IV(A) biosynthesis; lipid IV(A) from (3R)-3-hydroxytetradecanoyl-[acyl-carrier-protein] and UDP-N-acetyl-alpha-D-glucosamine: step 5/6. Its function is as follows. Condensation of UDP-2,3-diacylglucosamine and 2,3-diacylglucosamine-1-phosphate to form lipid A disaccharide, a precursor of lipid A, a phosphorylated glycolipid that anchors the lipopolysaccharide to the outer membrane of the cell. The chain is Lipid-A-disaccharide synthase from Citrobacter koseri (strain ATCC BAA-895 / CDC 4225-83 / SGSC4696).